Consider the following 163-residue polypeptide: Phosphopantetheine adenylyltransferase (163 aa).

T11 provides a ligand contact to substrate. Residues 11-12 (TF) and H19 each bind ATP. Residues K43, L75, and R89 each contribute to the substrate site. ATP contacts are provided by residues 90 to 92 (GLR), E100, and 125 to 131 (YSFISST).

The protein belongs to the bacterial CoaD family. In terms of assembly, homohexamer. Mg(2+) serves as cofactor.

It is found in the cytoplasm. The catalysed reaction is (R)-4'-phosphopantetheine + ATP + H(+) = 3'-dephospho-CoA + diphosphate. It participates in cofactor biosynthesis; coenzyme A biosynthesis; CoA from (R)-pantothenate: step 4/5. Its function is as follows. Reversibly transfers an adenylyl group from ATP to 4'-phosphopantetheine, yielding dephospho-CoA (dPCoA) and pyrophosphate. This Acinetobacter baumannii (strain ACICU) protein is Phosphopantetheine adenylyltransferase.